Consider the following 623-residue polypeptide: Chaperone protein DnaK (623 aa).

Thr175 carries the post-translational modification Phosphothreonine; by autocatalysis. Positions Pro580–Lys623 are disordered. Over residues Asn591–Ala603 the composition is skewed to low complexity. Basic and acidic residues predominate over residues Glu604 to Lys623.

This sequence belongs to the heat shock protein 70 family.

Its function is as follows. Acts as a chaperone. The polypeptide is Chaperone protein DnaK (Clostridium botulinum (strain Okra / Type B1)).